A 65-amino-acid polypeptide reads, in one-letter code: Small ribosomal subunit protein eS27 (65 aa).

Zn(2+) contacts are provided by cysteine 20, cysteine 23, cysteine 39, and cysteine 42. The segment at 20–42 adopts a C4-type zinc-finger fold; it reads CIDCGNEQIVFSHPATPVRCLVC.

Belongs to the eukaryotic ribosomal protein eS27 family. In terms of assembly, part of the 30S ribosomal subunit. Requires Zn(2+) as cofactor.

The protein is Small ribosomal subunit protein eS27 of Thermococcus kodakarensis (strain ATCC BAA-918 / JCM 12380 / KOD1) (Pyrococcus kodakaraensis (strain KOD1)).